The sequence spans 435 residues: ATP-dependent RNA helicase RhlB (435 aa).

The short motif at 9-37 (QKFADLGLNPQVVEGLEKKGFEFCTPIQA) is the Q motif element. Residues 40 to 219 (LPVLLSGQDI…FEHMHNPEHV (180 aa)) enclose the Helicase ATP-binding domain. 53 to 60 (AQTGTGKT) lines the ATP pocket. A DEAD box motif is present at residues 165–168 (DEAD). Positions 245 to 390 (ALLQTLIEEE…VSDYDSSALI (146 aa)) constitute a Helicase C-terminal domain. Residues 395-435 (APVRTPSARNQQRRTNTGGARSGDRKSNNRRPRQPRQHKEA) form a disordered region. The segment covering 401–413 (SARNQQRRTNTGG) has biased composition (polar residues). The span at 422-435 (NNRRPRQPRQHKEA) shows a compositional bias: basic residues.

The protein belongs to the DEAD box helicase family. RhlB subfamily. As to quaternary structure, component of the RNA degradosome, which is a multiprotein complex involved in RNA processing and mRNA degradation.

It localises to the cytoplasm. The catalysed reaction is ATP + H2O = ADP + phosphate + H(+). In terms of biological role, DEAD-box RNA helicase involved in RNA degradation. Has RNA-dependent ATPase activity and unwinds double-stranded RNA. In Vibrio vulnificus (strain CMCP6), this protein is ATP-dependent RNA helicase RhlB.